A 334-amino-acid chain; its full sequence is Beta-glucanase (334 aa).

An N-terminal signal peptide occupies residues 1–27; sequence MKNRVISLLMASLLLVLSVIVAPFYKA. The GH16 domain occupies 28-248; sequence EAATVVNTPF…YVKYYPNGVP (221 aa). The Nucleophile role is filled by Glu-136. Glu-140 functions as the Proton donor in the catalytic mechanism. A Dockerin domain is found at 267–334; it reads NLPLKGDVNG…RYLIRAIPSL (68 aa).

Belongs to the glycosyl hydrolase 16 family. May form part of a multienzyme complex (cellulosome).

It catalyses the reaction Hydrolysis of (1-&gt;4)-beta-D-glucosidic linkages in beta-D-glucans containing (1-&gt;3)- and (1-&gt;4)-bonds.. The protein is Beta-glucanase (licB) of Acetivibrio thermocellus (strain ATCC 27405 / DSM 1237 / JCM 9322 / NBRC 103400 / NCIMB 10682 / NRRL B-4536 / VPI 7372) (Clostridium thermocellum).